Reading from the N-terminus, the 155-residue chain is 2-C-methyl-D-erythritol 2,4-cyclodiphosphate synthase (155 aa).

Residues aspartate 8 and histidine 10 each coordinate a divalent metal cation. 4-CDP-2-C-methyl-D-erythritol 2-phosphate contacts are provided by residues 8–10 and 34–35; these read DVH and HS. Residue histidine 42 participates in a divalent metal cation binding. 4-CDP-2-C-methyl-D-erythritol 2-phosphate-binding positions include 56 to 58, 61 to 65, 100 to 106, 132 to 135, phenylalanine 139, and lysine 142; these read DIG, FPDSD, AQKPKML, and TTEE.

This sequence belongs to the IspF family. As to quaternary structure, homotrimer. A divalent metal cation is required as a cofactor.

The catalysed reaction is 4-CDP-2-C-methyl-D-erythritol 2-phosphate = 2-C-methyl-D-erythritol 2,4-cyclic diphosphate + CMP. It participates in isoprenoid biosynthesis; isopentenyl diphosphate biosynthesis via DXP pathway; isopentenyl diphosphate from 1-deoxy-D-xylulose 5-phosphate: step 4/6. Involved in the biosynthesis of isopentenyl diphosphate (IPP) and dimethylallyl diphosphate (DMAPP), two major building blocks of isoprenoid compounds. Catalyzes the conversion of 4-diphosphocytidyl-2-C-methyl-D-erythritol 2-phosphate (CDP-ME2P) to 2-C-methyl-D-erythritol 2,4-cyclodiphosphate (ME-CPP) with a corresponding release of cytidine 5-monophosphate (CMP). In Clostridium botulinum (strain 657 / Type Ba4), this protein is 2-C-methyl-D-erythritol 2,4-cyclodiphosphate synthase.